The following is a 367-amino-acid chain: NADH-quinone oxidoreductase subunit H (367 aa).

8 helical membrane-spanning segments follow: residues 18–38, 87–107, 132–152, 180–200, 204–224, 257–277, 291–311, and 328–348; these read VLLFLKIIIVIISVMVSVAYL, LCFLIAPVITFTLALLGWAVI, IGVLYILAISSLGVYGIIIAG, LTIVTVLLATGSLKLGEIVIA, MPYWIDLLLLPMAFMFFISAL, FFLGEYANMILMSAMAVIFFF, IIPGTIWFIFKIVILLFCFIW, and GWKVFLPISLFWVILVSGILV.

This sequence belongs to the complex I subunit 1 family. As to quaternary structure, NDH-1 is composed of 14 different subunits. Subunits NuoA, H, J, K, L, M, N constitute the membrane sector of the complex.

It is found in the cell inner membrane. It catalyses the reaction a quinone + NADH + 5 H(+)(in) = a quinol + NAD(+) + 4 H(+)(out). NDH-1 shuttles electrons from NADH, via FMN and iron-sulfur (Fe-S) centers, to quinones in the respiratory chain. The immediate electron acceptor for the enzyme in this species is believed to be ubiquinone. Couples the redox reaction to proton translocation (for every two electrons transferred, four hydrogen ions are translocated across the cytoplasmic membrane), and thus conserves the redox energy in a proton gradient. This subunit may bind ubiquinone. In Ehrlichia ruminantium (strain Gardel), this protein is NADH-quinone oxidoreductase subunit H.